Consider the following 448-residue polypeptide: Phosphoglucosamine mutase (448 aa).

S100 (phosphoserine intermediate) is an active-site residue. Positions 100, 240, 242, and 244 each coordinate Mg(2+). S100 carries the post-translational modification Phosphoserine.

The protein belongs to the phosphohexose mutase family. The cofactor is Mg(2+). Activated by phosphorylation.

It catalyses the reaction alpha-D-glucosamine 1-phosphate = D-glucosamine 6-phosphate. Functionally, catalyzes the conversion of glucosamine-6-phosphate to glucosamine-1-phosphate. The protein is Phosphoglucosamine mutase of Clostridium perfringens (strain ATCC 13124 / DSM 756 / JCM 1290 / NCIMB 6125 / NCTC 8237 / Type A).